The primary structure comprises 134 residues: MRMLLHLSLLALGAAYVSAIAVQSPMNRLVAETLALLSTHRTLLIGDGNLMIPTPEHNNHQLCIEEVFQGIDTLKNRTVPGDAVEKLFRNLSLIKEHIDRQKKKCGGERWRVKKFLDYLQVFLGVINTEWTMES.

The N-terminal stretch at 1–19 (MRMLLHLSLLALGAAYVSA) is a signal peptide. N-linked (GlcNAc...) asparagine glycosylation is found at Asn-76 and Asn-90.

It belongs to the IL-5 family. In terms of assembly, homodimer; disulfide-linked. Interacts with IL5RA. Interacts with CSF2RB.

It localises to the secreted. Homodimeric cytokine expressed predominantly by T-lymphocytes and NK cells that plays an important role in the survival, differentiation, and chemotaxis of eosinophils. Also acts on activated and resting B-cells to induce immunoglobulin production, growth, and differentiation. Mechanistically, exerts its biological effects through a receptor composed of IL5RA subunit and the cytokine receptor common subunit beta/CSF2RB. Binding to the receptor leads to activation of various kinases including LYN, SYK and JAK2 and thereby propagates signals through the RAS-MAPK and JAK-STAT5 pathways respectively. The chain is Interleukin-5 (IL5) from Felis catus (Cat).